Consider the following 117-residue polypeptide: Putative hydrolase fragment YghX (117 aa).

Residues 91-117 (DGLSSVGGYPGNDDKGRELQQQVDPTN) form a disordered region.

This is Putative hydrolase fragment YghX (yghX) from Escherichia coli (strain K12).